The primary structure comprises 369 residues: sn-glycerol-3-phosphate import ATP-binding protein UgpC (369 aa).

Residues 4 to 235 (LSLRNVQKTY…PASTFVAGFI (232 aa)) enclose the ABC transporter domain. 37 to 44 (GPSGCGKS) contributes to the ATP binding site.

The protein belongs to the ABC transporter superfamily. sn-glycerol-3-phosphate importer (TC 3.A.1.1.3) family. The complex is composed of two ATP-binding proteins (UgpC), two transmembrane proteins (UgpA and UgpE) and a solute-binding protein (UgpB).

It is found in the cell inner membrane. It carries out the reaction sn-glycerol 3-phosphate(out) + ATP + H2O = sn-glycerol 3-phosphate(in) + ADP + phosphate + H(+). Functionally, part of the ABC transporter complex UgpBAEC involved in sn-glycerol-3-phosphate (G3P) import. Responsible for energy coupling to the transport system. This is sn-glycerol-3-phosphate import ATP-binding protein UgpC from Cupriavidus pinatubonensis (strain JMP 134 / LMG 1197) (Cupriavidus necator (strain JMP 134)).